Consider the following 209-residue polypeptide: Ribonuclease HII (209 aa).

The RNase H type-2 domain maps to 18–209; it reads GLIAGVDEVG…FKPVKALLEG (192 aa). A divalent metal cation contacts are provided by Asp24, Glu25, and Asp116.

The protein belongs to the RNase HII family. Mn(2+) serves as cofactor. Mg(2+) is required as a cofactor.

It is found in the cytoplasm. The enzyme catalyses Endonucleolytic cleavage to 5'-phosphomonoester.. In terms of biological role, endonuclease that specifically degrades the RNA of RNA-DNA hybrids. The sequence is that of Ribonuclease HII from Shewanella putrefaciens (strain CN-32 / ATCC BAA-453).